We begin with the raw amino-acid sequence, 626 residues long: UvrABC system protein C (626 aa).

One can recognise a GIY-YIG domain in the interval 20-97 (ECSGVYKMLD…IKKFQPKFNI (78 aa)). Positions 207-242 (IALQANLSKKMQELSSQMRFEEAAEIRDRIKALSYV) constitute a UVR domain.

Belongs to the UvrC family. In terms of assembly, interacts with UvrB in an incision complex.

The protein localises to the cytoplasm. Its function is as follows. The UvrABC repair system catalyzes the recognition and processing of DNA lesions. UvrC both incises the 5' and 3' sides of the lesion. The N-terminal half is responsible for the 3' incision and the C-terminal half is responsible for the 5' incision. This Rickettsia prowazekii (strain Madrid E) protein is UvrABC system protein C.